Reading from the N-terminus, the 4074-residue chain is Fibrocystin (4074 aa).

A signal peptide spans 1 to 22 (MIVWLISLMSIEILLLAGPALS). Residues N54 and N224 are each glycosylated (N-linked (GlcNAc...) asparagine). The IPT/TIG 1 domain maps to 258 to 310 (EILSVFPETGSLGGKTDIIITGDFFDNPALVTIAGVPCDIRHMSPRKIECTTR). A PA14 domain is found at 323–483 (AGNRGLLFEV…TWLNPDVVST (161 aa)). N355, N385, N518, N527, N640, N710, N741, N822, N829, N868, N953, N966, N976, N1006, N1059, N1083, N1115, N1134, N1233, N1240, N1274, N1284, N1308, N1319, N1342, N1373, N1445, N1456, N1471, N1490, N1528, N1560, N1578, N1598, N1627, N1694, N1760, N1775, N1789, N1875, N1915, N1941, N1955, N2030, N2111, and N2140 each carry an N-linked (GlcNAc...) asparagine glycan. One can recognise an IPT/TIG 2 domain in the interval 944 to 1000 (SLLIYIFGINFSGDPQALEIMVNKTNCKVIFSNQTNVICQTDLLPVGMHRLFMVVRP). IPT/TIG domains follow at residues 1018 to 1101 (PRLD…AFTY), 1107 to 1186 (PVIT…RSPG), and 1199 to 1274 (SIEP…WAGN). Positions 1385 to 1464 (PWIMAISPTH…LNVTVIVNGL (80 aa)) constitute an IPT/TIG 6 domain. One can recognise an IPT/TIG 7 domain in the interval 1573–1641 (HYFPKNFSIH…LVIEVDGLSY (69 aa)). The region spanning 1928 to 2049 (HSWFPERVPQ…PEVTFTHLQA (122 aa)) is the G8 1 domain. PbH1 repeat units follow at residues 2245 to 2267 (TLGL…LVGT), 2288 to 2322 (EQGN…YILN), 2351 to 2373 (APLL…FIYP), 2383 to 2404 (RGPT…RISR), and 2405 to 2427 (SSNL…DILE). N2390 carries an N-linked (GlcNAc...) asparagine glycan. Residues N2431, N2467, N2531, N2549, N2579, N2591, N2749, N2764, N2972, and N3004 are each glycosylated (N-linked (GlcNAc...) asparagine). The stretch at 2460–2483 (RWELIISNTTFVNFDLTDCVSIRT) is one PbH1 6 repeat. One can recognise a G8 2 domain in the interval 2743–2869 (EGWGGHNHTI…PKKSWTRLAA (127 aa)). The PbH1 7 repeat unit spans residues 3029–3051 (SHGIILNDNIVFGTVGHGIDLEG). A glycan (N-linked (GlcNAc...) asparagine) is linked at N3053. The PbH1 8 repeat unit spans residues 3082–3104 (AKDINLYGNVVAGSERIGFHIQG). Residues N3136, N3165, N3221, N3484, N3702, N3721, and N3833 are each glycosylated (N-linked (GlcNAc...) asparagine). The PbH1 9 repeat unit spans residues 3158–3183 (ENSVEIENITLVDNSIGLLATVYVSS). The chain crosses the membrane as a helical span at residues 3854-3874 (IILAVSLCSVASWLALCCLVC). Positions 3871-3888 (CLVCCWFRKSKSRKIKSE) are ciliary targeting sequence (CST). Disordered stretches follow at residues 3896 to 3919 (NDQK…KEDT), 3943 to 3965 (NGVS…REED), and 4031 to 4074 (LQGQ…QEQL). 2 stretches are compositionally biased toward basic and acidic residues: residues 3910 to 3919 (RSQETKKEDT) and 3954 to 3965 (AVREEGSSREED). A nuclear localization signal (NLS) region spans residues 3947–3976 (RRKVSRRAVREEGSSREEDVVPAPRIISIT).

In terms of assembly, interacts with CAMLG. Interacts with PKD2. Interacts (via CST) with ARF4; this interaction allows an efficient PKHD1 trafficking to the cilium. Interacts (via CST) with RAB8A; this interaction controls trafficking through the endomembrane systeme and to the cilium. Interacts (via CST) with TULP3; this interaction allows PKHD1 trafficking to the cilium. In terms of processing, palmitoylated. Palmitoylation facilitates the trafficking to the cilia and membrane targeting. N-glycosylated. Post-translationally, several proteolytic cleavages occur within the extracellular domain, whereas at least one cleavage occurs within the cytoplasmic domain. Cleaved by a probable proprotein convertase which produces an extracellular domain (polyductin extracellular domain, (PECD)) and a C-terminal fragment (polyductin transmembrane fragment (PTM)) which are tethered together by disulfide bonds. This extracellular domain (PECD) is then shed from the primary cilium by activation of a member of the ADAM metalloproteinase disintegrins family, resulting in concomitant release of an intra-cellular C-terminal fragment (ICD) via a gamma-secretase-dependent process. The proteolytic cleavage of the C-terminal intracellular fragment (ICD) is controlled by cytosolic calcium concentration and activation of PKC.

It localises to the cell membrane. The protein resides in the cytoplasm. It is found in the apical cell membrane. Its subcellular location is the cytoskeleton. The protein localises to the cilium basal body. It localises to the cell projection. The protein resides in the cilium. It is found in the spindle. Its subcellular location is the chromosome. The protein localises to the centromere. It localises to the nucleus. The protein resides in the secreted. It is found in the extracellular exosome. Its subcellular location is the endoplasmic reticulum. The protein localises to the golgi apparatus. Promotes ciliogenesis in renal epithelial cells and therefore participates in the tubules formation and/ or ensures the maintenance of the architecture of the lumen of the kidney. Has an impact on cellular symmetry by ensuring correct bipolar cell division through the regulation of centrosome duplication and mitotic spindle assembly and by maintaining oriented cell division (OCD) during tubular elongation through planar cell polarity (PCP) pathway. During epithelial cell morphogenesis, it also regulates cell-cell and cell-matrix adhesion and participates in cell motility. Promotes cell-cell contact through the positive regulation of PTK2 kinase activity leading to either positive regulation of epithelial cell proliferation through the HRAS/RAF1 pathways, or negative regulation of apoptosis through the PDK1/AKT1 pathway. May act in collecting-duct and biliary differentiation. May participate in the regulation of the cholangiocytes proliferation and the CCN2 production in an CXCL8-dependent manner. The chain is Fibrocystin from Canis lupus familiaris (Dog).